The chain runs to 635 residues: Factor of DNA methylation 2 (635 aa).

Residues 289–471 (LDEKKNLHQA…ESMNSVLMTK (183 aa)) are a coiled coil. Residues 350-365 (ELERQKLDEDKRKSDA) show a composition bias toward basic and acidic residues. The segment at 350 to 376 (ELERQKLDEDKRKSDAMNKSLQLASRE) is disordered.

In terms of assembly, forms a complex with IDN2 and FMD1/INDL1. In terms of tissue distribution, highly expressed in flowers and at lower levels in roots, leaves and stems.

Its function is as follows. Forms a complex with IDN2 and FDM1/IDNL1 that is required for RNA-directed DNA methylation (RdDM) and that functions at a downstream step of the RdDM pathway. This is Factor of DNA methylation 2 from Arabidopsis thaliana (Mouse-ear cress).